A 173-amino-acid chain; its full sequence is uncharacterized protein (173 aa).

The interval 1–23 (ELTSVAGSGRVDSTPLGSRGVTD) is disordered.

Component of the acid-insoluble and acid-soluble organic matrix of calcified layers of the shell (at protein level).

The protein localises to the secreted. This is an uncharacterized protein from Lottia gigantea (Giant owl limpet).